Reading from the N-terminus, the 425-residue chain is GTPase Obg (425 aa).

An Obg domain is found at 1-158 (MFIDKAKIYV…REIILELKLL (158 aa)). Positions 159 to 331 (ADVGLVGFPN…LMAEVSKTLA (173 aa)) constitute an OBG-type G domain. GTP contacts are provided by residues 165 to 172 (GFPNVGKS), 190 to 194 (FTTLK), 212 to 215 (DIPG), 282 to 285 (NKSD), and 312 to 314 (SAA). Positions 172 and 192 each coordinate Mg(2+). One can recognise an OCT domain in the interval 345–425 (LFIPEEKRFT…LNDFEFEFVI (81 aa)).

Belongs to the TRAFAC class OBG-HflX-like GTPase superfamily. OBG GTPase family. Monomer. It depends on Mg(2+) as a cofactor.

The protein resides in the cytoplasm. Its function is as follows. An essential GTPase which binds GTP, GDP and possibly (p)ppGpp with moderate affinity, with high nucleotide exchange rates and a fairly low GTP hydrolysis rate. Plays a role in control of the cell cycle, stress response, ribosome biogenesis and in those bacteria that undergo differentiation, in morphogenesis control. In Clostridium tetani (strain Massachusetts / E88), this protein is GTPase Obg.